Consider the following 326-residue polypeptide: Eukaryotic translation initiation factor 3 subunit I (326 aa).

WD repeat units lie at residues 8-47, 50-89, 145-184, 188-227, and 285-326; these read GHER…RLGT, GHQG…VIAS, MTES…KVVD, DHSA…CLKT, and GHFG…NIFE.

It belongs to the eIF-3 subunit I family. Component of the eukaryotic translation initiation factor 3 (eIF-3) complex. The eIF-3 complex interacts with pix.

The protein resides in the cytoplasm. Its function is as follows. Component of the eukaryotic translation initiation factor 3 (eIF-3) complex, which is involved in protein synthesis of a specialized repertoire of mRNAs and, together with other initiation factors, stimulates binding of mRNA and methionyl-tRNAi to the 40S ribosome. The eIF-3 complex specifically targets and initiates translation of a subset of mRNAs involved in cell proliferation. The protein is Eukaryotic translation initiation factor 3 subunit I of Drosophila simulans (Fruit fly).